Consider the following 240-residue polypeptide: Pyridoxine 5'-phosphate synthase (240 aa).

Position 7 (Asn-7) interacts with 3-amino-2-oxopropyl phosphate. 9–10 (DH) provides a ligand contact to 1-deoxy-D-xylulose 5-phosphate. Arg-18 provides a ligand contact to 3-amino-2-oxopropyl phosphate. His-43 (proton acceptor) is an active-site residue. 2 residues coordinate 1-deoxy-D-xylulose 5-phosphate: Arg-45 and His-50. Glu-70 acts as the Proton acceptor in catalysis. Thr-100 provides a ligand contact to 1-deoxy-D-xylulose 5-phosphate. Catalysis depends on His-191, which acts as the Proton donor. 3-amino-2-oxopropyl phosphate contacts are provided by residues Gly-192 and 213-214 (GH).

This sequence belongs to the PNP synthase family. Homooctamer; tetramer of dimers.

Its subcellular location is the cytoplasm. It catalyses the reaction 3-amino-2-oxopropyl phosphate + 1-deoxy-D-xylulose 5-phosphate = pyridoxine 5'-phosphate + phosphate + 2 H2O + H(+). Its pathway is cofactor biosynthesis; pyridoxine 5'-phosphate biosynthesis; pyridoxine 5'-phosphate from D-erythrose 4-phosphate: step 5/5. Catalyzes the complicated ring closure reaction between the two acyclic compounds 1-deoxy-D-xylulose-5-phosphate (DXP) and 3-amino-2-oxopropyl phosphate (1-amino-acetone-3-phosphate or AAP) to form pyridoxine 5'-phosphate (PNP) and inorganic phosphate. The chain is Pyridoxine 5'-phosphate synthase from Trichodesmium erythraeum (strain IMS101).